A 442-amino-acid polypeptide reads, in one-letter code: MRFRIYKRKVLILTLVVAACGFVLWSSNGRQRKNDALAPPLLDSEPLRGAGHFAASVGIRRVSNDSAAPLVPAVPRPEVDNLTLRYRSLVYQLNFDQMLRNVDKDGTWSPGELVLVVQVHNRPEYLRLLIDSLRKAQGIREVLVIFSHDFWSAEINSLISSVDFCPVLQVFFPFSIQLYPSEFPGSDPRDCPRDLKKNAALKLGCINAEYPDSFGHYREAKFSQTKHHWWWKLHFVWERVKVLQDYTGLILFLEEDHYLAPDFYHVFKKMWKLKQQECPGCDVLSLGTYTTIRSFYGIADKVDVKTWKSTEHNMGLALTRDAYQKLIECTDTFCTYDDYNWDWTLQYLTLACLPKVWKVLVPQAPRIFHAGDCGMHHKKTCRPSTQSAQIESLLNNNKQYLFPETLVIGEKFPMAAISPPRKNGGWGDIRDHELCKSYRRLQ.

At 1–9 (MRFRIYKRK) the chain is on the cytoplasmic side. A helical; Signal-anchor for type II membrane protein membrane pass occupies residues 10–29 (VLILTLVVAACGFVLWSSNG). At 30–442 (RQRKNDALAP…ELCKSYRRLQ (413 aa)) the chain is on the lumenal side. N-linked (GlcNAc...) asparagine glycosylation is found at Asn-64 and Asn-81. Substrate-binding positions include 118–122 (QVHNR) and Asp-149. Cys-191 and Cys-205 form a disulfide bridge. Residue 224–228 (QTKHH) participates in substrate binding. A Mn(2+)-binding site is contributed by Asp-256. Residues Cys-278 and Cys-281 are joined by a disulfide bond. Arg-293 contributes to the substrate binding site. Cystine bridges form between Cys-329/Cys-352, Cys-334/Cys-435, and Cys-373/Cys-381. A Mn(2+)-binding site is contributed by His-369.

The protein belongs to the glycosyltransferase 16 (GT16) protein family. In terms of assembly, homodimer. Requires Mn(2+) as cofactor. Detected in liver (at protein level). Detected in liver, brain, thymus and spleen.

It localises to the golgi apparatus membrane. It carries out the reaction an N(4)-{beta-D-GlcNAc-(1-&gt;2)-alpha-D-Man-(1-&gt;3)-[alpha-D-Man-(1-&gt;6)]-beta-D-Man-(1-&gt;4)-beta-D-GlcNAc-(1-&gt;4)-beta-D-GlcNAc}-L-asparaginyl-[protein] + UDP-N-acetyl-alpha-D-glucosamine = N(4)-{beta-D-GlcNAc-(1-&gt;2)-alpha-D-Man-(1-&gt;3)-[beta-D-GlcNAc-(1-&gt;2)-alpha-D-Man-(1-&gt;6)]-beta-D-Man-(1-&gt;4)-beta-D-GlcNAc-(1-&gt;4)-beta-D-GlcNAc}-L-asparaginyl-[protein] + UDP + H(+). The protein operates within protein modification; protein glycosylation. Its function is as follows. Plays an essential role in protein N-glycosylation. Catalyzes the transfer of N-acetylglucosamine (GlcNAc) onto the free terminal mannose moiety in the core structure of the nascent N-linked glycan chain, giving rise to the second branch in complex glycans. The polypeptide is Alpha-1,6-mannosyl-glycoprotein 2-beta-N-acetylglucosaminyltransferase (Mgat2) (Rattus norvegicus (Rat)).